A 96-amino-acid chain; its full sequence is UPF0235 protein YPN_3141 (96 aa).

This sequence belongs to the UPF0235 family.

The sequence is that of UPF0235 protein YPN_3141 from Yersinia pestis bv. Antiqua (strain Nepal516).